The sequence spans 103 residues: Histone H4 (103 aa).

A compositionally biased stretch (gly residues) spans 1-14 (MSGRGKGGKGLGKG). Residues 1-20 (MSGRGKGGKGLGKGGAKRHR) form a disordered region. An N-acetylserine modification is found at serine 2. Lysine 17 carries the post-translational modification N6-acetyllysine. A DNA-binding region spans residues 17–21 (KRHRK). N6-methyllysine is present on lysine 21.

The protein belongs to the histone H4 family. In terms of assembly, the nucleosome is a histone octamer containing two molecules each of H2A, H2B, H3 and H4 assembled in one H3-H4 heterotetramer and two H2A-H2B heterodimers. The octamer wraps approximately 147 bp of DNA.

It is found in the nucleus. The protein resides in the chromosome. Core component of nucleosome. Nucleosomes wrap and compact DNA into chromatin, limiting DNA accessibility to the cellular machineries which require DNA as a template. Histones thereby play a central role in transcription regulation, DNA repair, DNA replication and chromosomal stability. DNA accessibility is regulated via a complex set of post-translational modifications of histones, also called histone code, and nucleosome remodeling. This Pyrenomonas salina protein is Histone H4.